The following is a 288-amino-acid chain: Phosphatidylserine decarboxylase proenzyme (288 aa).

Active-site charge relay system; for autoendoproteolytic cleavage activity residues include D101, H158, and S262. S262 (schiff-base intermediate with substrate; via pyruvic acid; for decarboxylase activity) is an active-site residue. The residue at position 262 (S262) is a Pyruvic acid (Ser); by autocatalysis.

This sequence belongs to the phosphatidylserine decarboxylase family. PSD-B subfamily. Prokaryotic type I sub-subfamily. Heterodimer of a large membrane-associated beta subunit and a small pyruvoyl-containing alpha subunit. Pyruvate serves as cofactor. In terms of processing, is synthesized initially as an inactive proenzyme. Formation of the active enzyme involves a self-maturation process in which the active site pyruvoyl group is generated from an internal serine residue via an autocatalytic post-translational modification. Two non-identical subunits are generated from the proenzyme in this reaction, and the pyruvate is formed at the N-terminus of the alpha chain, which is derived from the carboxyl end of the proenzyme. The autoendoproteolytic cleavage occurs by a canonical serine protease mechanism, in which the side chain hydroxyl group of the serine supplies its oxygen atom to form the C-terminus of the beta chain, while the remainder of the serine residue undergoes an oxidative deamination to produce ammonia and the pyruvoyl prosthetic group on the alpha chain. During this reaction, the Ser that is part of the protease active site of the proenzyme becomes the pyruvoyl prosthetic group, which constitutes an essential element of the active site of the mature decarboxylase.

It is found in the cell membrane. It catalyses the reaction a 1,2-diacyl-sn-glycero-3-phospho-L-serine + H(+) = a 1,2-diacyl-sn-glycero-3-phosphoethanolamine + CO2. The protein operates within phospholipid metabolism; phosphatidylethanolamine biosynthesis; phosphatidylethanolamine from CDP-diacylglycerol: step 2/2. In terms of biological role, catalyzes the formation of phosphatidylethanolamine (PtdEtn) from phosphatidylserine (PtdSer). In Alkalilimnicola ehrlichii (strain ATCC BAA-1101 / DSM 17681 / MLHE-1), this protein is Phosphatidylserine decarboxylase proenzyme.